A 229-amino-acid chain; its full sequence is Adapter protein MecA (229 aa).

Belongs to the MecA family. Homodimer.

Enables the recognition and targeting of unfolded and aggregated proteins to the ClpC protease or to other proteins involved in proteolysis. This chain is Adapter protein MecA, found in Latilactobacillus sakei subsp. sakei (strain 23K) (Lactobacillus sakei subsp. sakei).